A 295-amino-acid polypeptide reads, in one-letter code: Cuticle collagen 3A3 (295 aa).

Residues 81–278 (AITSSEENGG…GRPGEPGICP (198 aa)) form a disordered region. 2 stretches are compositionally biased toward pro residues: residues 97 to 109 (PGPP…PGRP) and 146 to 160 (AGPP…PPGD). 3 triple-helical region regions span residues 98–127 (GPPG…PGLP), 147–203 (GPPG…VGED), and 212–277 (GDQG…PGIC). Residues 172 to 182 (QDGIPGQQGTK) show a composition bias toward low complexity. The span at 217-228 (PGEPGPEGPPGE) shows a compositional bias: pro residues. Positions 229–244 (PGLQGPVGMPGQVGQK) are enriched in low complexity. Positions 261–271 (RPGPPGPPGRP) are enriched in pro residues.

This sequence belongs to the cuticular collagen family.

Nematode cuticles are composed largely of collagen-like proteins. The cuticle functions both as an exoskeleton and as a barrier to protect the worm from its environment. This is Cuticle collagen 3A3 (3A3) from Haemonchus contortus (Barber pole worm).